Consider the following 79-residue polypeptide: MKVKAVASQIPVTPRKVCLVVDLIRGQKIKEAEAILTLNSKSAAPIVLKLLKSAVANAVNNFNLNKDDLYVEEIFVNES.

Belongs to the universal ribosomal protein uL22 family. In terms of assembly, part of the 50S ribosomal subunit.

In terms of biological role, this protein binds specifically to 23S rRNA; its binding is stimulated by other ribosomal proteins, e.g. L4, L17, and L20. It is important during the early stages of 50S assembly. It makes multiple contacts with different domains of the 23S rRNA in the assembled 50S subunit and ribosome. Functionally, the globular domain of the protein is located near the polypeptide exit tunnel on the outside of the subunit, while an extended beta-hairpin is found that lines the wall of the exit tunnel in the center of the 70S ribosome. The protein is Large ribosomal subunit protein uL22 (rplV) of Clover proliferation phytoplasma.